Here is a 130-residue protein sequence, read N- to C-terminus: Small ribosomal subunit protein uS11 (130 aa).

It belongs to the universal ribosomal protein uS11 family. In terms of assembly, part of the 30S ribosomal subunit. Interacts with proteins S7 and S18. Binds to IF-3.

Its function is as follows. Located on the platform of the 30S subunit, it bridges several disparate RNA helices of the 16S rRNA. Forms part of the Shine-Dalgarno cleft in the 70S ribosome. This is Small ribosomal subunit protein uS11 from Alkalilimnicola ehrlichii (strain ATCC BAA-1101 / DSM 17681 / MLHE-1).